We begin with the raw amino-acid sequence, 275 residues long: 3-methyl-2-oxobutanoate hydroxymethyltransferase (275 aa).

Mg(2+) contacts are provided by aspartate 49 and aspartate 88. 3-methyl-2-oxobutanoate is bound by residues 49 to 50, aspartate 88, and lysine 118; that span reads DS. Glutamate 120 contacts Mg(2+). The Proton acceptor role is filled by glutamate 187.

It belongs to the PanB family. As to quaternary structure, homodecamer; pentamer of dimers. Mg(2+) is required as a cofactor.

It localises to the cytoplasm. It catalyses the reaction 3-methyl-2-oxobutanoate + (6R)-5,10-methylene-5,6,7,8-tetrahydrofolate + H2O = 2-dehydropantoate + (6S)-5,6,7,8-tetrahydrofolate. The protein operates within cofactor biosynthesis; (R)-pantothenate biosynthesis; (R)-pantoate from 3-methyl-2-oxobutanoate: step 1/2. In terms of biological role, catalyzes the reversible reaction in which hydroxymethyl group from 5,10-methylenetetrahydrofolate is transferred onto alpha-ketoisovalerate to form ketopantoate. The polypeptide is 3-methyl-2-oxobutanoate hydroxymethyltransferase (Nitrobacter hamburgensis (strain DSM 10229 / NCIMB 13809 / X14)).